The sequence spans 355 residues: Histidinol-phosphate aminotransferase (355 aa).

At Lys211 the chain carries N6-(pyridoxal phosphate)lysine.

The protein belongs to the class-II pyridoxal-phosphate-dependent aminotransferase family. Histidinol-phosphate aminotransferase subfamily. As to quaternary structure, homodimer. It depends on pyridoxal 5'-phosphate as a cofactor.

The catalysed reaction is L-histidinol phosphate + 2-oxoglutarate = 3-(imidazol-4-yl)-2-oxopropyl phosphate + L-glutamate. Its pathway is amino-acid biosynthesis; L-histidine biosynthesis; L-histidine from 5-phospho-alpha-D-ribose 1-diphosphate: step 7/9. The polypeptide is Histidinol-phosphate aminotransferase (Aeromonas salmonicida (strain A449)).